The primary structure comprises 286 residues: Ribosomal RNA small subunit methyltransferase A (286 aa).

S-adenosyl-L-methionine-binding residues include Asn-31, Ile-33, Gly-58, Glu-80, Asp-106, and Asn-125.

This sequence belongs to the class I-like SAM-binding methyltransferase superfamily. rRNA adenine N(6)-methyltransferase family. RsmA subfamily.

It localises to the cytoplasm. It carries out the reaction adenosine(1518)/adenosine(1519) in 16S rRNA + 4 S-adenosyl-L-methionine = N(6)-dimethyladenosine(1518)/N(6)-dimethyladenosine(1519) in 16S rRNA + 4 S-adenosyl-L-homocysteine + 4 H(+). Specifically dimethylates two adjacent adenosines (A1518 and A1519) in the loop of a conserved hairpin near the 3'-end of 16S rRNA in the 30S particle. May play a critical role in biogenesis of 30S subunits. This is Ribosomal RNA small subunit methyltransferase A from Wolbachia pipientis wMel.